The chain runs to 94 residues: Large ribosomal subunit protein bL25 (94 aa).

This sequence belongs to the bacterial ribosomal protein bL25 family. Part of the 50S ribosomal subunit; part of the 5S rRNA/L5/L18/L25 subcomplex. Contacts the 5S rRNA. Binds to the 5S rRNA independently of L5 and L18.

Its function is as follows. This is one of the proteins that binds to the 5S RNA in the ribosome where it forms part of the central protuberance. The sequence is that of Large ribosomal subunit protein bL25 from Serratia proteamaculans (strain 568).